The primary structure comprises 375 residues: Queuine tRNA-ribosyltransferase (375 aa).

Aspartate 89 serves as the catalytic Proton acceptor. Residues 89–93, aspartate 143, glutamine 187, and glycine 214 each bind substrate; that span reads DSGGF. The tract at residues 245-251 is RNA binding; sequence GVGKPED. Aspartate 264 serves as the catalytic Nucleophile. The interval 269-273 is RNA binding; important for wobble base 34 recognition; the sequence is TRNAR. Zn(2+)-binding residues include cysteine 302, cysteine 304, cysteine 307, and histidine 333.

It belongs to the queuine tRNA-ribosyltransferase family. In terms of assembly, homodimer. Within each dimer, one monomer is responsible for RNA recognition and catalysis, while the other monomer binds to the replacement base PreQ1. Requires Zn(2+) as cofactor.

It carries out the reaction 7-aminomethyl-7-carbaguanine + guanosine(34) in tRNA = 7-aminomethyl-7-carbaguanosine(34) in tRNA + guanine. Its pathway is tRNA modification; tRNA-queuosine biosynthesis. Its function is as follows. Catalyzes the base-exchange of a guanine (G) residue with the queuine precursor 7-aminomethyl-7-deazaguanine (PreQ1) at position 34 (anticodon wobble position) in tRNAs with GU(N) anticodons (tRNA-Asp, -Asn, -His and -Tyr). Catalysis occurs through a double-displacement mechanism. The nucleophile active site attacks the C1' of nucleotide 34 to detach the guanine base from the RNA, forming a covalent enzyme-RNA intermediate. The proton acceptor active site deprotonates the incoming PreQ1, allowing a nucleophilic attack on the C1' of the ribose to form the product. After dissociation, two additional enzymatic reactions on the tRNA convert PreQ1 to queuine (Q), resulting in the hypermodified nucleoside queuosine (7-(((4,5-cis-dihydroxy-2-cyclopenten-1-yl)amino)methyl)-7-deazaguanosine). This is Queuine tRNA-ribosyltransferase from Photobacterium profundum (strain SS9).